The chain runs to 557 residues: Potassium-transporting ATPase potassium-binding subunit (557 aa).

The next 12 membrane-spanning stretches (helical) occupy residues 5–25 (GFLL…PLGS), 63–83 (LCAI…MLLG), 132–152 (GLTV…FALI), 170–190 (LLRI…LFFI), 253–273 (FVQM…FGEV), 283–303 (LLWA…WAEV), 329–349 (VLVS…AVIA), 356–376 (ALGG…FGGV), 379–399 (GLYG…LMIG), 416–436 (LTAL…ALAM), 484–504 (LLAL…MAIA), and 526–546 (LFVG…FIPA).

It belongs to the KdpA family. In terms of assembly, the system is composed of three essential subunits: KdpA, KdpB and KdpC.

The protein localises to the cell inner membrane. Its function is as follows. Part of the high-affinity ATP-driven potassium transport (or Kdp) system, which catalyzes the hydrolysis of ATP coupled with the electrogenic transport of potassium into the cytoplasm. This subunit binds the periplasmic potassium ions and delivers the ions to the membrane domain of KdpB through an intramembrane tunnel. The polypeptide is Potassium-transporting ATPase potassium-binding subunit (Escherichia coli O81 (strain ED1a)).